Here is a 341-residue protein sequence, read N- to C-terminus: B3 domain-containing transcription factor VRN1 (341 aa).

The TF-B3 1 DNA-binding region spans phenylalanine 5 to serine 98. Positions glycine 166–threonine 223 are disordered. The segment covering isoleucine 179–lysine 188 has biased composition (basic residues). Over residues proline 200–phenylalanine 211 the composition is skewed to basic and acidic residues. Positions phenylalanine 244–asparagine 338 form a DNA-binding region, TF-B3 2.

As to expression, expressed in roots and at lower levels in aerial parts.

It localises to the nucleus. Its function is as follows. Essential protein. Involved in the regulation of vernalization. Acts as a transcriptional repressor of FLC, a major target of the vernalization pathway. Binds DNA in vitro in a non-sequence-specific manner. This chain is B3 domain-containing transcription factor VRN1, found in Arabidopsis thaliana (Mouse-ear cress).